The following is a 272-amino-acid chain: HMP-PP phosphatase (272 aa).

Residue D8 is the Nucleophile of the active site. D8, D10, and D212 together coordinate Mg(2+).

The protein belongs to the HAD-like hydrolase superfamily. Cof family. Requires Mg(2+) as cofactor.

The enzyme catalyses 4-amino-2-methyl-5-(diphosphooxymethyl)pyrimidine + H2O = 4-amino-2-methyl-5-(phosphooxymethyl)pyrimidine + phosphate + H(+). In terms of biological role, catalyzes the hydrolysis of 4-amino-2-methyl-5-hydroxymethylpyrimidine pyrophosphate (HMP-PP) to 4-amino-2-methyl-5-hydroxymethylpyrimidine phosphate (HMP-P). The chain is HMP-PP phosphatase from Salmonella arizonae (strain ATCC BAA-731 / CDC346-86 / RSK2980).